The chain runs to 450 residues: TNF receptor-associated factor family protein DDB_G0273433/DDB_G0273509 (450 aa).

The RING-type; degenerate zinc-finger motif lies at C26–K73. TRAF-type zinc fingers lie at residues H129 to N185 and K186 to S243. Positions Q257–S297 form a coiled coil. An MATH domain is found at V319–I439.

Belongs to the TNF receptor-associated factor family. A subfamily.

Its subcellular location is the cytoplasm. In terms of biological role, probable adapter protein and signal transducer that links members of the tumor necrosis factor receptor family to different signaling pathways by association with the receptor cytoplasmic domain and kinases. The sequence is that of TNF receptor-associated factor family protein DDB_G0273433/DDB_G0273509 from Dictyostelium discoideum (Social amoeba).